Reading from the N-terminus, the 357-residue chain is GDP-mannose transporter 2 (357 aa).

The Cytoplasmic segment spans residues 1-43; sequence MASTRNGISKDELLPTYELQSQRDVENSGSVTSFASKISNNAA. A helical membrane pass occupies residues 44–64; sequence AAVLAYCLSSISMTLVNKYVV. At 65–68 the chain is on the lumenal side; the sequence is SGAS. The helical transmembrane segment at 69–89 threads the bilayer; the sequence is WNLSFLYLAIQSFIGTVAIMV. Topologically, residues 90 to 107 are cytoplasmic; it reads CKKAGLIQNLGLFDLKKA. The chain crosses the membrane as a helical span at residues 108 to 128; it reads QTWLPISLLLVGMIYTGNKAL. Glutamine 129 is a topological domain (lumenal). A helical membrane pass occupies residues 130–150; sequence FLSVPVYTIFKNLTIIVIAYG. Residues 151 to 161 are Cytoplasmic-facing; sequence EVFMVGGSVKP. Residues 162 to 182 form a helical membrane-spanning segment; that stretch reads LALLSFGLMVLSSVVAAWADI. Residues 183 to 196 are Lumenal-facing; sequence QIATAATAKASSDS. Residues 197–217 traverse the membrane as a helical segment; the sequence is AVATLSALNAGYAWMGTNVVF. Residues 218–238 are Cytoplasmic-facing; it reads SASYALGMRRVIKKTNFDNWD. Residues 239–259 form a helical membrane-spanning segment; it reads VMFYNNLLSVPILLLSSLLVE. The Lumenal segment spans residues 260 to 277; that stretch reads DWSSENLQRNFPAESRQS. A helical membrane pass occupies residues 278 to 298; the sequence is LVIGIFYSGVAAIFISYCTAW. The Cytoplasmic portion of the chain corresponds to 299–306; that stretch reads CVRATSST. A helical membrane pass occupies residues 307–327; the sequence is TYAMVGALNKLPLAVAGIVFF. The Lumenal segment spans residues 328 to 332; that stretch reads AAPVT. The chain crosses the membrane as a helical span at residues 333 to 352; the sequence is FGSVSAIVLGFISGLVYTWA. The Cytoplasmic segment spans residues 353-357; sequence KSTGA.

The protein belongs to the TPT transporter family. SLC35D subfamily. In terms of assembly, homooligomer.

The protein resides in the golgi apparatus membrane. The protein localises to the cytoplasmic vesicle membrane. It is found in the endoplasmic reticulum membrane. Involved in the import of GDP-mannose from the cytoplasm into the Golgi lumen. The protein is GDP-mannose transporter 2 (gmt2) of Emericella nidulans (strain FGSC A4 / ATCC 38163 / CBS 112.46 / NRRL 194 / M139) (Aspergillus nidulans).